Reading from the N-terminus, the 566-residue chain is Multidrug and toxin extrusion protein 1 (566 aa).

An N-acetylmethionine modification is found at Met1. 13 consecutive transmembrane segments (helical) span residues 37 to 57, 72 to 92, 120 to 140, 152 to 172, 176 to 196, 216 to 236, 257 to 276, 295 to 315, 336 to 356, 370 to 390, 409 to 429, 437 to 457, and 543 to 563; these read LLVLAGPAFLAQLMMFLISFI, AVTLAIAVINVTGISVGHGLS, LILLLCCFPCWALFINTEQIL, LTQTYVMVFIPALPAAFLYTL, YLLNQGIVLPQVITGIAANLV, ALANTISQFALAIFLFLYILW, SFLQLAIPSMLMLCIEWWAY, SITYELAIIVYMIPAGFSVAA, AISLIVTELFAVTFCVLLLGC, IVALVAQVVPIYAVSHLFEAL, IVNAIGYYVIGLPIGISLMFV, LWSGIIICSVCQTSCFLVFIA, and GLLFLGVVLVLVGGILVRVYI.

Belongs to the multi antimicrobial extrusion (MATE) (TC 2.A.66.1) family. Highly expressed in kidney and placenta, moderately in stomach, colon, lung, spleen, skeletal muscle and prostate, and slightly in spleen. In the kidney, found in medulla and cortex, especially in the proximal convoluted and straight tubules. No expression was observed in heart, brain, small intestine and liver. Expressed in Sertoli cells in testis.

It is found in the cell membrane. It localises to the apical cell membrane. The enzyme catalyses thiamine(out) + H(+)(in) = thiamine(in) + H(+)(out). The catalysed reaction is estrone 3-sulfate(in) + H(+)(out) = estrone 3-sulfate(out) + H(+)(in). It catalyses the reaction creatinine(in) + H(+)(out) = creatinine(out) + H(+)(in). It carries out the reaction agmatine(in) + H(+)(out) = agmatine(out) + H(+)(in). Its function is as follows. Multidrug efflux pump that functions as a H(+)/organic cation antiporter. Plays a physiological role in the excretion of cationic compounds including endogenous metabolites, drugs, toxins through the kidney and liver, into urine and bile respectively. Mediates the efflux of endogenous compounds such as creatinine, vitamin B1/thiamine, agmatine and estrone-3-sulfate. May also contribute to regulate the transport of cationic compounds in testis across the blood-testis-barrier. This chain is Multidrug and toxin extrusion protein 1 (Slc47a1), found in Rattus norvegicus (Rat).